A 350-amino-acid polypeptide reads, in one-letter code: Probable L-aspartate decarboxylase (350 aa).

N6-(pyridoxal phosphate)lysine is present on Lys206.

This sequence belongs to the group II decarboxylase family. MfnA subfamily. Requires pyridoxal 5'-phosphate as cofactor.

It catalyses the reaction L-aspartate + H(+) = beta-alanine + CO2. Its pathway is cofactor biosynthesis; coenzyme A biosynthesis. In terms of biological role, catalyzes the decarboxylation of L-aspartate to produce beta-alanine. This is Probable L-aspartate decarboxylase from Haloarcula marismortui (strain ATCC 43049 / DSM 3752 / JCM 8966 / VKM B-1809) (Halobacterium marismortui).